A 269-amino-acid chain; its full sequence is Indole-3-glycerol phosphate synthase (269 aa).

Belongs to the TrpC family.

It carries out the reaction 1-(2-carboxyphenylamino)-1-deoxy-D-ribulose 5-phosphate + H(+) = (1S,2R)-1-C-(indol-3-yl)glycerol 3-phosphate + CO2 + H2O. It functions in the pathway amino-acid biosynthesis; L-tryptophan biosynthesis; L-tryptophan from chorismate: step 4/5. This Rhodococcus jostii (strain RHA1) protein is Indole-3-glycerol phosphate synthase.